A 206-amino-acid polypeptide reads, in one-letter code: MKLLAIDSSILTNTSVSRQLTRSFVSRWQKIYPETEVVYRDLHAQPINHLSQKILAANSVPSTQISAEIREEMNLSMQLISELLSASVLVIGAPMYNFSIPSQLKSWIDRIVIAGKTFKYVDGKVQGLATGKRAYILSSRGGFYNAEPALNLDHQERYLTSILNFIGISDITFIRAEGVNVGEEIRTQSLHQAEAKIQQLLQFQMA.

FMN-binding positions include serine 9, 15 to 17 (SVS), 95 to 98 (MYNF), and 139 to 142 (SRGG).

It belongs to the azoreductase type 1 family. As to quaternary structure, homodimer. It depends on FMN as a cofactor.

It carries out the reaction 2 a quinone + NADH + H(+) = 2 a 1,4-benzosemiquinone + NAD(+). The enzyme catalyses N,N-dimethyl-1,4-phenylenediamine + anthranilate + 2 NAD(+) = 2-(4-dimethylaminophenyl)diazenylbenzoate + 2 NADH + 2 H(+). Its function is as follows. Quinone reductase that provides resistance to thiol-specific stress caused by electrophilic quinones. In terms of biological role, also exhibits azoreductase activity. Catalyzes the reductive cleavage of the azo bond in aromatic azo compounds to the corresponding amines. This chain is FMN-dependent NADH:quinone oxidoreductase, found in Legionella pneumophila subsp. pneumophila (strain Philadelphia 1 / ATCC 33152 / DSM 7513).